The chain runs to 512 residues: MHTVVVGTSGVTASDVLAVARGGARIELSGEAVTALAAARGIVDALAAKPEPVYGVSTGFGALATRHISQELRAQLQRNIVRSHAAGMGPRVEREVVRALMFLRLKTVCSGHTGVRPEVAQTMADILNAGITPVVHEYGSLGCSGDLAPLSHCALTLMGEGDAEGPDGTVRPAGDLLAEHGITPVELREKEGLALLNGTDGMLGMLVMALADLDALYKSADITAALSLEALLGTDKVLAPELHAIRPHPGQGASAANMLAVLAGSELTGHHQDDAPRVQDAYSVRCAPQVAGAGRDTLAHARLVAERELASAVDNPVVLPDGRVESNGNFHGAPVAYVLDFLAIAAADLGSIAERRTDRLLDKNRSHGLPPFLADDAGVDSGLMIAQYTQAALVSEMKRLAVPASADSIPSSAMQEDHVSMGWSAARKLRTAIDNLTRIVAIELYAATRAIELREGLTPAPASQAVITAVRKAGVEGPGPDRFLAPDLAAADAFVRDGSLVTAAETVTGPLA.

A cross-link (5-imidazolinone (Cys-Gly)) is located at residues 143 to 145 (CSG). The residue at position 144 (S144) is a 2,3-didehydroalanine (Ser).

The protein belongs to the PAL/histidase family. Post-translationally, contains an active site 4-methylidene-imidazol-5-one (MIO), which is formed autocatalytically by cyclization and dehydration of residues Cys-Ser-Gly.

The protein localises to the cytoplasm. It catalyses the reaction L-histidine = trans-urocanate + NH4(+). It functions in the pathway amino-acid degradation; L-histidine degradation into L-glutamate; N-formimidoyl-L-glutamate from L-histidine: step 1/3. The polypeptide is Histidine ammonia-lyase (Streptomyces avermitilis (strain ATCC 31267 / DSM 46492 / JCM 5070 / NBRC 14893 / NCIMB 12804 / NRRL 8165 / MA-4680)).